The sequence spans 437 residues: Glutamate-1-semialdehyde 2,1-aminomutase (437 aa).

Lys277 is modified (N6-(pyridoxal phosphate)lysine).

This sequence belongs to the class-III pyridoxal-phosphate-dependent aminotransferase family. HemL subfamily. Homodimer. The cofactor is pyridoxal 5'-phosphate.

Its subcellular location is the cytoplasm. The enzyme catalyses (S)-4-amino-5-oxopentanoate = 5-aminolevulinate. Its pathway is porphyrin-containing compound metabolism; protoporphyrin-IX biosynthesis; 5-aminolevulinate from L-glutamyl-tRNA(Glu): step 2/2. It functions in the pathway porphyrin-containing compound metabolism; chlorophyll biosynthesis. This Thermosynechococcus vestitus (strain NIES-2133 / IAM M-273 / BP-1) protein is Glutamate-1-semialdehyde 2,1-aminomutase.